The chain runs to 550 residues: Medium-chain acyl-CoA ligase Mig (550 aa).

The first 19 residues, 1 to 19, serve as a signal peptide directing secretion; sequence MSDTTTAFTVPAVAKAVAA.

The protein belongs to the ATP-dependent AMP-binding enzyme family.

It is found in the secreted. It localises to the cell wall. It catalyses the reaction a medium-chain fatty acid + ATP + CoA = a medium-chain fatty acyl-CoA + AMP + diphosphate. The enzyme catalyses hexanoate + ATP + CoA = hexanoyl-CoA + AMP + diphosphate. The catalysed reaction is heptanoate + ATP + CoA = heptanoyl-CoA + AMP + diphosphate. It carries out the reaction octanoate + ATP + CoA = octanoyl-CoA + AMP + diphosphate. It catalyses the reaction decanoate + ATP + CoA = decanoyl-CoA + AMP + diphosphate. The enzyme catalyses dodecanoate + ATP + CoA = dodecanoyl-CoA + AMP + diphosphate. The catalysed reaction is tetradecanoate + ATP + CoA = tetradecanoyl-CoA + AMP + diphosphate. It carries out the reaction (9Z)-octadecenoate + ATP + CoA = (9Z)-octadecenoyl-CoA + AMP + diphosphate. It catalyses the reaction (9Z,12Z,15Z)-octadecatrienoate + ATP + CoA = (9Z,12Z,15Z)-octadecatrienoyl-CoA + AMP + diphosphate. The enzyme catalyses (5Z,8Z,11Z,14Z)-eicosatetraenoate + ATP + CoA = (5Z,8Z,11Z,14Z)-eicosatetraenoyl-CoA + AMP + diphosphate. The protein operates within lipid metabolism; fatty acid metabolism. Inhibited by 2-hydroxydodecanoic acid, a typical inhibitor of medium-chain acyl-CoA synthetases. In terms of biological role, catalyzes the activation of medium-chain fatty acids as acyl-coenzyme A (acyl-CoA). Shows maximal activity with saturated fatty acids of medium-chain length between C6 and C12. Has lower activity with tridecanoic acid (C13), tetradecanoic acid (C14) and with unsaturated fatty acids like oleic acid (C18:1), linolenic acid (C18:3) and arachidonic acid (C20:4). Shows weak activity with some aromatic carbon acids. Involved in the metabolism of fatty acid during mycobacterial survival in macrophages. This chain is Medium-chain acyl-CoA ligase Mig, found in Mycobacterium avium.